The sequence spans 233 residues: Small ribosomal subunit protein uS2c (233 aa).

Belongs to the universal ribosomal protein uS2 family.

The protein localises to the plastid. It localises to the chloroplast. The protein is Small ribosomal subunit protein uS2c (rps2) of Staurastrum punctulatum (Green alga).